Here is a 253-residue protein sequence, read N- to C-terminus: MRILLSNDDGYLAPGLAALYEALRPLAEVMVMAPEQNCSGASNSLTLSRPLSVSRSATTGFYYVNGTPTDSVHVALTGMLDAKPDLVVSGINNGQNMGDDTLYSGTVAAATEGIMFGVPAIAFSLVHKEWAHLEDAARVAAEIVRHYLDHPLPGQPLLNVNIPNLPYGELRGWRVTRLGKRHPSQPVIRQINPRGEPIYWIGAAGDALDASEGTDFHATAAGYVSITPLQLDLTHTQMLAATRDWAHAGSGAS.

Residues Asp-8, Asp-9, Ser-39, and Asn-92 each contribute to the a divalent metal cation site.

Belongs to the SurE nucleotidase family. The cofactor is a divalent metal cation.

The protein resides in the cytoplasm. The enzyme catalyses a ribonucleoside 5'-phosphate + H2O = a ribonucleoside + phosphate. Functionally, nucleotidase that shows phosphatase activity on nucleoside 5'-monophosphates. This Burkholderia thailandensis (strain ATCC 700388 / DSM 13276 / CCUG 48851 / CIP 106301 / E264) protein is 5'-nucleotidase SurE.